The chain runs to 419 residues: Serine hydroxymethyltransferase (419 aa).

Residues leucine 121 and 125 to 127 (GHL) contribute to the (6S)-5,6,7,8-tetrahydrofolate site. An N6-(pyridoxal phosphate)lysine modification is found at lysine 230. Residue 355–357 (SPF) coordinates (6S)-5,6,7,8-tetrahydrofolate.

This sequence belongs to the SHMT family. In terms of assembly, homodimer. Pyridoxal 5'-phosphate serves as cofactor.

It localises to the cytoplasm. The enzyme catalyses (6R)-5,10-methylene-5,6,7,8-tetrahydrofolate + glycine + H2O = (6S)-5,6,7,8-tetrahydrofolate + L-serine. Its pathway is one-carbon metabolism; tetrahydrofolate interconversion. It functions in the pathway amino-acid biosynthesis; glycine biosynthesis; glycine from L-serine: step 1/1. Functionally, catalyzes the reversible interconversion of serine and glycine with tetrahydrofolate (THF) serving as the one-carbon carrier. This reaction serves as the major source of one-carbon groups required for the biosynthesis of purines, thymidylate, methionine, and other important biomolecules. Also exhibits THF-independent aldolase activity toward beta-hydroxyamino acids, producing glycine and aldehydes, via a retro-aldol mechanism. This chain is Serine hydroxymethyltransferase, found in Alkalilimnicola ehrlichii (strain ATCC BAA-1101 / DSM 17681 / MLHE-1).